The primary structure comprises 329 residues: Phosphate acyltransferase (329 aa).

This sequence belongs to the PlsX family. As to quaternary structure, homodimer. Probably interacts with PlsY.

It localises to the cytoplasm. The enzyme catalyses a fatty acyl-[ACP] + phosphate = an acyl phosphate + holo-[ACP]. It functions in the pathway lipid metabolism; phospholipid metabolism. Catalyzes the reversible formation of acyl-phosphate (acyl-PO(4)) from acyl-[acyl-carrier-protein] (acyl-ACP). This enzyme utilizes acyl-ACP as fatty acyl donor, but not acyl-CoA. The sequence is that of Phosphate acyltransferase from Exiguobacterium sp. (strain ATCC BAA-1283 / AT1b).